Reading from the N-terminus, the 250-residue chain is Replicating protein (250 aa).

Disordered regions lie at residues methionine 1–lysine 23 and lysine 168–glutamate 250. 2 stretches are compositionally biased toward basic and acidic residues: residues glycine 13–lysine 23 and aspartate 178–alanine 190. Positions serine 218–proline 237 are enriched in polar residues.

In terms of biological role, required for replication. It likely regulates pTAR copy number. The chain is Replicating protein (repA) from Rhizobium radiobacter (Agrobacterium tumefaciens).